Here is a 600-residue protein sequence, read N- to C-terminus: MRVTTSFPLGTLRDTPSEAEIISHQLLLKGGYIRRVNSGIYAYMPIMLKVIEKISNIIEKELNNNGCSKLLLPQLHPAELWKRSERWEGYTAGEGIMFNLKDRQGKEFGLAPTHEEVITNIASEIINSYKQLPLCFYQIQTKFRDEIRPRFGLMRSREFIMKDGYSFHSSKEDLSSFYEKMERSYENIFKNCGLDTVGVDADSGAIGGAASKEFMVTADAGEDYILFTESGSYAANIEKAISLPSKEIPLKSFETEWLETPNQKSIVDICKENDLDASQIVKVVIFVAKFENKSQLPILTCIRGDQHINEIKLFNLISKKYSSNLISLEIIEDNATIEKNLTNFPLGYIGPDINDEVIKNSSSWDKSWIRIADHSANNLSSFVSGSNKVNFHKVFQTFSFIDNQFLISDIRNAKKGDRISLESNEELKEKRGIEIGHIFQLGQKYSEKLNAKFSDKDGKLKNLWMGCYGIGVTRIAQAAIEQNHDENGISWPIQISPFEILIIPTNLKDPYQTKLTEEIYKEFESKKIDVLLDDRDVRAGVKFKDADLIGIPFQIIIGRDSINKEVEFICRSSKRKIKISSQNLLEKFISESKILYNENS.

The protein belongs to the class-II aminoacyl-tRNA synthetase family. ProS type 1 subfamily. In terms of assembly, homodimer.

It is found in the cytoplasm. The catalysed reaction is tRNA(Pro) + L-proline + ATP = L-prolyl-tRNA(Pro) + AMP + diphosphate. Its function is as follows. Catalyzes the attachment of proline to tRNA(Pro) in a two-step reaction: proline is first activated by ATP to form Pro-AMP and then transferred to the acceptor end of tRNA(Pro). As ProRS can inadvertently accommodate and process non-cognate amino acids such as alanine and cysteine, to avoid such errors it has two additional distinct editing activities against alanine. One activity is designated as 'pretransfer' editing and involves the tRNA(Pro)-independent hydrolysis of activated Ala-AMP. The other activity is designated 'posttransfer' editing and involves deacylation of mischarged Ala-tRNA(Pro). The misacylated Cys-tRNA(Pro) is not edited by ProRS. This Prochlorococcus marinus (strain MIT 9515) protein is Proline--tRNA ligase.